A 297-amino-acid chain; its full sequence is NAD kinase (297 aa).

Asp-74 functions as the Proton acceptor in the catalytic mechanism. NAD(+) is bound by residues 74-75 (DG), Arg-79, 148-149 (NE), Arg-176, Asp-178, 189-194 (TAYALS), and Gln-248.

The protein belongs to the NAD kinase family. A divalent metal cation serves as cofactor.

The protein localises to the cytoplasm. The catalysed reaction is NAD(+) + ATP = ADP + NADP(+) + H(+). Functionally, involved in the regulation of the intracellular balance of NAD and NADP, and is a key enzyme in the biosynthesis of NADP. Catalyzes specifically the phosphorylation on 2'-hydroxyl of the adenosine moiety of NAD to yield NADP. The sequence is that of NAD kinase from Blochmanniella pennsylvanica (strain BPEN).